The primary structure comprises 625 residues: Folylpolyglutamate synthase (625 aa).

141-144 (GKGS) contacts ATP. The Mg(2+) site is built by serine 165, glutamate 234, and histidine 262. ATP is bound by residues arginine 384 and aspartate 414.

This sequence belongs to the folylpolyglutamate synthase family. It depends on a monovalent cation as a cofactor.

The protein localises to the mitochondrion inner membrane. It localises to the mitochondrion matrix. It carries out the reaction (6S)-5,6,7,8-tetrahydrofolyl-(gamma-L-Glu)(n) + L-glutamate + ATP = (6S)-5,6,7,8-tetrahydrofolyl-(gamma-L-Glu)(n+1) + ADP + phosphate + H(+). Its pathway is cofactor biosynthesis; tetrahydrofolylpolyglutamate biosynthesis. Its function is as follows. Catalyzes conversion of folates to polyglutamate derivatives allowing concentration of folate compounds in the cell and the intracellular retention of these cofactors, which are important substrates for most of the folate-dependent enzymes that are involved in one-carbon transfer reactions involved in purine, pyrimidine and amino acid synthesis. Essential for organellar and whole-plant folate homeostasis. The protein is Folylpolyglutamate synthase of Arabidopsis thaliana (Mouse-ear cress).